Here is a 1155-residue protein sequence, read N- to C-terminus: DNA-directed RNA polymerase subunit beta (1155 aa).

The protein belongs to the RNA polymerase beta chain family. The RNAP catalytic core consists of 2 alpha, 1 beta, 1 beta' and 1 omega subunit. When a sigma factor is associated with the core the holoenzyme is formed, which can initiate transcription.

It carries out the reaction RNA(n) + a ribonucleoside 5'-triphosphate = RNA(n+1) + diphosphate. Its function is as follows. DNA-dependent RNA polymerase catalyzes the transcription of DNA into RNA using the four ribonucleoside triphosphates as substrates. The polypeptide is DNA-directed RNA polymerase subunit beta (Thermobifida fusca (strain YX)).